We begin with the raw amino-acid sequence, 214 residues long: Holliday junction branch migration complex subunit RuvA (214 aa).

Positions 1 to 64 are domain I; sequence MITRIRGEML…EDAMTLYGFT (64 aa). A domain II region spans residues 65 to 143; it reads SGEQLAVFEL…DITSKDAYQD (79 aa). Residues 144 to 160 are flexible linker; it reads ISASEKLDNTGEKLGIS. The interval 161–214 is domain III; the sequence is TRHKHLDELKAALSSLGYTNREIEKTVDAIQGQITEGQDMEELLRLALQKLNTK.

It belongs to the RuvA family. In terms of assembly, homotetramer. Forms an RuvA(8)-RuvB(12)-Holliday junction (HJ) complex. HJ DNA is sandwiched between 2 RuvA tetramers; dsDNA enters through RuvA and exits via RuvB. An RuvB hexamer assembles on each DNA strand where it exits the tetramer. Each RuvB hexamer is contacted by two RuvA subunits (via domain III) on 2 adjacent RuvB subunits; this complex drives branch migration. In the full resolvosome a probable DNA-RuvA(4)-RuvB(12)-RuvC(2) complex forms which resolves the HJ.

It localises to the cytoplasm. Its function is as follows. The RuvA-RuvB-RuvC complex processes Holliday junction (HJ) DNA during genetic recombination and DNA repair, while the RuvA-RuvB complex plays an important role in the rescue of blocked DNA replication forks via replication fork reversal (RFR). RuvA specifically binds to HJ cruciform DNA, conferring on it an open structure. The RuvB hexamer acts as an ATP-dependent pump, pulling dsDNA into and through the RuvAB complex. HJ branch migration allows RuvC to scan DNA until it finds its consensus sequence, where it cleaves and resolves the cruciform DNA. This is Holliday junction branch migration complex subunit RuvA from Natranaerobius thermophilus (strain ATCC BAA-1301 / DSM 18059 / JW/NM-WN-LF).